Here is a 1188-residue protein sequence, read N- to C-terminus: Adenomatous polyposis coli protein-related protein 1 (1188 aa).

The tract at residues 1 to 50 is disordered; sequence MSSSSSDENETTIHRTGSNTGGSGIYSQPRAGSSKRTSNVRHDVSDVDDE. The interval 1–486 is required for interaction with bar-1 and hmp-2; the sequence is MSSSSSDENE…LSLRATRASP (486 aa). The stretch at 314-358 is one ARM repeat; that stretch reads NCLKVLASLLSPDARFTSLVDSATGILKYVSQYLANTSTHLELRS. Over residues 579-588 the composition is skewed to low complexity; the sequence is IQQQQQMQKA. Disordered regions lie at residues 579 to 624, 670 to 702, 726 to 751, 778 to 952, 1003 to 1092, and 1157 to 1181; these read IQQQ…SMNP, TESE…DGAT, TPNG…GPSL, QSEM…TMRF, CSMI…LKDK, and YQKP…PNPK. The interval 600–1188 is required for interaction with pry-1; sequence DLDIPTSTVM…NPKQMLVTIV (589 aa). Composition is skewed to polar residues over residues 604–624 and 677–701; these read PTST…SMNP and LTSQ…SDGA. Composition is skewed to polar residues over residues 778 to 788 and 800 to 811; these read QSEMPTSSSTP and FSPTQKTTSSPA. Basic and acidic residues-rich tracts occupy residues 832-843 and 871-900; these read RRQDASDADRLL and EPER…DHNG. Polar residues-rich tracts occupy residues 909–929, 937–946, 1014–1039, and 1164–1180; these read WSPQ…SSED, EPNSSTSGAA, QRNE…SASS, and GRNN…TPNP.

The protein belongs to the adenomatous polyposis coli (APC) family. Interacts (via N-terminus) with bar-1 and hmp-2; the interaction with hmp-2 is relatively weak. Interacts (via C-terminus) with pry-1 (via N-terminus). Probably associates with bar-1, gsk-3, pry-1 in a complex. During the L1 stage, expressed in vulval precursor cells (P3-8.p), seam cells and excretory cells.

The protein resides in the cell junction. The protein localises to the adherens junction. It localises to the cytoplasm. It is found in the nucleus. Has a role in endoderm cell specification and pharyngeal development. Required for the migration of epithelial cells, organization of the anterior seam cells and ceh-13 expression during embryo morphogenesis. Prevents hyperactivation of the Wnt signaling pathway during endoderm development, probably by preventing hmp-2 nuclear translocation. During larval development, apr-1 is required for expression of lin-39 in P3-8.p. Shown to negatively regulate Wnt signaling in vulval precursor cells. Has a role in cell division by establishing the polarity of the mother cell which forms the asymmetries of the daughter nuclei. During the L4 larval stage, it is required for the asymmetric division and self-renewal of seam cells. Thought to regulate export of wrm-1 from the nucleus possibly as part of a complex involving pry-1. The sequence is that of Adenomatous polyposis coli protein-related protein 1 from Caenorhabditis elegans.